A 375-amino-acid polypeptide reads, in one-letter code: Succinyl-diaminopimelate desuccinylase (375 aa).

Residue H66 participates in Zn(2+) binding. Residue D68 is part of the active site. D99 contacts Zn(2+). E133 acts as the Proton acceptor in catalysis. Zn(2+) contacts are provided by E134, E162, and H348.

The protein belongs to the peptidase M20A family. DapE subfamily. As to quaternary structure, homodimer. Zn(2+) is required as a cofactor. It depends on Co(2+) as a cofactor.

It carries out the reaction N-succinyl-(2S,6S)-2,6-diaminopimelate + H2O = (2S,6S)-2,6-diaminopimelate + succinate. Its pathway is amino-acid biosynthesis; L-lysine biosynthesis via DAP pathway; LL-2,6-diaminopimelate from (S)-tetrahydrodipicolinate (succinylase route): step 3/3. In terms of biological role, catalyzes the hydrolysis of N-succinyl-L,L-diaminopimelic acid (SDAP), forming succinate and LL-2,6-diaminopimelate (DAP), an intermediate involved in the bacterial biosynthesis of lysine and meso-diaminopimelic acid, an essential component of bacterial cell walls. This Janthinobacterium sp. (strain Marseille) (Minibacterium massiliensis) protein is Succinyl-diaminopimelate desuccinylase.